A 251-amino-acid chain; its full sequence is MLTKRIIPCLDVTAGRVVKGVNFVSLTDVGDPVEIAKAYNEAGADELVFLDITATVELRQTMIDVVERTAEQVFIPLTVGGGISSVSDMKELLQAGADKISLNSAAIKRPELIQEGAAKFGNQCIVVAIDAKWNGTNWSVFTRGGRNDTGLDAIEWAKKAVQLGAGEILLTSMDGDGTKNGYDIPLTKAISAAVSVPVIASGGCGNAAHMAEVFEKTKATAALAASIFHYGELSIKNVKTTLLEKGVNIRP.

Active-site residues include Asp-11 and Asp-130.

This sequence belongs to the HisA/HisF family. As to quaternary structure, heterodimer of HisH and HisF.

The protein localises to the cytoplasm. It catalyses the reaction 5-[(5-phospho-1-deoxy-D-ribulos-1-ylimino)methylamino]-1-(5-phospho-beta-D-ribosyl)imidazole-4-carboxamide + L-glutamine = D-erythro-1-(imidazol-4-yl)glycerol 3-phosphate + 5-amino-1-(5-phospho-beta-D-ribosyl)imidazole-4-carboxamide + L-glutamate + H(+). It functions in the pathway amino-acid biosynthesis; L-histidine biosynthesis; L-histidine from 5-phospho-alpha-D-ribose 1-diphosphate: step 5/9. Its function is as follows. IGPS catalyzes the conversion of PRFAR and glutamine to IGP, AICAR and glutamate. The HisF subunit catalyzes the cyclization activity that produces IGP and AICAR from PRFAR using the ammonia provided by the HisH subunit. This chain is Imidazole glycerol phosphate synthase subunit HisF, found in Listeria monocytogenes serotype 4b (strain CLIP80459).